A 379-amino-acid polypeptide reads, in one-letter code: Putative thylakoid lumen peptidyl-prolyl cis-trans isomerase sll0408 (379 aa).

An N-terminal signal peptide occupies residues 1 to 33; sequence MQIIKTPLGIITRRGLQLSLLSLLLTMLSLTWA. Residues 190 to 378 form the PPIase cyclophilin-type domain; it reads GRATVEMTTN…SGADNLVNGN (189 aa).

The protein localises to the cellular thylakoid lumen. The catalysed reaction is [protein]-peptidylproline (omega=180) = [protein]-peptidylproline (omega=0). PPIases accelerate the folding of proteins. It catalyzes the cis-trans isomerization of proline imidic peptide bonds in oligopeptides. Required for the assembly and stabilization of PSII. In Synechocystis sp. (strain ATCC 27184 / PCC 6803 / Kazusa), this protein is Putative thylakoid lumen peptidyl-prolyl cis-trans isomerase sll0408.